A 431-amino-acid polypeptide reads, in one-letter code: Histidine--tRNA ligase (431 aa).

The segment at 1-20 (MALQRPKGTQDHLPDGSPKL) is disordered.

Belongs to the class-II aminoacyl-tRNA synthetase family. In terms of assembly, homodimer.

Its subcellular location is the cytoplasm. The enzyme catalyses tRNA(His) + L-histidine + ATP = L-histidyl-tRNA(His) + AMP + diphosphate + H(+). The chain is Histidine--tRNA ligase from Deinococcus geothermalis (strain DSM 11300 / CIP 105573 / AG-3a).